The sequence spans 64 residues: Large ribosomal subunit protein bL35 (64 aa).

Residues 1-20 (MKQKTHKGTAKRIKVTGSGK) form a disordered region.

It belongs to the bacterial ribosomal protein bL35 family.

This chain is Large ribosomal subunit protein bL35, found in Corynebacterium urealyticum (strain ATCC 43042 / DSM 7109).